The chain runs to 295 residues: MLISLPKVRGIYRYDVLMSKATWLNVGGRADVLFKPCDIEDLTYLIKNTELPVSVIGATSNIIVRDSGIRGITVKLGKEFAYIKSKGNNSIVAGGAVLLSNLAHFAGNQQISGLEFLVGIPGTVGGGIEMNAGAYGSDIASVVQSIKAVNLEDGNLYEFSSEEMGYFYRGHSLKGNWIFVEAEFKGVNSEYELILQRLKEVIERKNKSQPIRGKTAGCIFKNPKNYRAWELIDKSGCLRLNIGGARISKKHCNFLLNYDNATASDLENLGNKVKDAVKDKFNVELEWEIRVLGSY.

Residues 26-189 form the FAD-binding PCMH-type domain; the sequence is VGGRADVLFK…VEAEFKGVNS (164 aa). Arg169 is an active-site residue. Cys218 acts as the Proton donor in catalysis. Glu288 is a catalytic residue.

It belongs to the MurB family. FAD is required as a cofactor.

The protein localises to the cytoplasm. The enzyme catalyses UDP-N-acetyl-alpha-D-muramate + NADP(+) = UDP-N-acetyl-3-O-(1-carboxyvinyl)-alpha-D-glucosamine + NADPH + H(+). The protein operates within cell wall biogenesis; peptidoglycan biosynthesis. Cell wall formation. This is UDP-N-acetylenolpyruvoylglucosamine reductase from Wolbachia pipientis wMel.